We begin with the raw amino-acid sequence, 542 residues long: Putative cysteine ligase BshC (542 aa).

The stretch at 458–479 forms a coiled coil; it reads LTKNATLLQAQIDFLHQTLQRA.

This sequence belongs to the BshC family.

Involved in bacillithiol (BSH) biosynthesis. May catalyze the last step of the pathway, the addition of cysteine to glucosamine malate (GlcN-Mal) to generate BSH. In Geobacillus sp. (strain WCH70), this protein is Putative cysteine ligase BshC.